We begin with the raw amino-acid sequence, 119 residues long: Holo-[acyl-carrier-protein] synthase (119 aa).

The Mg(2+) site is built by aspartate 8 and glutamate 58.

Belongs to the P-Pant transferase superfamily. AcpS family. Mg(2+) is required as a cofactor.

Its subcellular location is the cytoplasm. It catalyses the reaction apo-[ACP] + CoA = holo-[ACP] + adenosine 3',5'-bisphosphate + H(+). Functionally, transfers the 4'-phosphopantetheine moiety from coenzyme A to a Ser of acyl-carrier-protein. In Bacillus mycoides (strain KBAB4) (Bacillus weihenstephanensis), this protein is Holo-[acyl-carrier-protein] synthase.